The sequence spans 384 residues: L-lactate dehydrogenase (384 aa).

Positions 1–380 constitute an FMN hydroxy acid dehydrogenase domain; sequence MIISSSNDYR…NESCLVEMNK (380 aa). Residue Y24 coordinates substrate. S106 and Q127 together coordinate FMN. Y129 is a binding site for substrate. An FMN-binding site is contributed by T155. R164 contributes to the substrate binding site. Position 251 (K251) interacts with FMN. H275 (proton acceptor) is an active-site residue. Residue R278 participates in substrate binding. Position 306–330 (306–330) interacts with FMN; the sequence is DSGIRNGLDVVRMLALGADSVMLGR.

The protein belongs to the FMN-dependent alpha-hydroxy acid dehydrogenase family. It depends on FMN as a cofactor.

The protein resides in the cell inner membrane. It catalyses the reaction (S)-lactate + A = pyruvate + AH2. Functionally, catalyzes the conversion of L-lactate to pyruvate. Is coupled to the respiratory chain. The polypeptide is L-lactate dehydrogenase (Acinetobacter baylyi (strain ATCC 33305 / BD413 / ADP1)).